The sequence spans 156 residues: ATP synthase subunit b (156 aa).

Residues 5–27 (ITLIGQMITFAIFVGFTMKFVWP) form a helical membrane-spanning segment.

The protein belongs to the ATPase B chain family. F-type ATPases have 2 components, F(1) - the catalytic core - and F(0) - the membrane proton channel. F(1) has five subunits: alpha(3), beta(3), gamma(1), delta(1), epsilon(1). F(0) has three main subunits: a(1), b(2) and c(10-14). The alpha and beta chains form an alternating ring which encloses part of the gamma chain. F(1) is attached to F(0) by a central stalk formed by the gamma and epsilon chains, while a peripheral stalk is formed by the delta and b chains.

The protein localises to the cell inner membrane. Functionally, f(1)F(0) ATP synthase produces ATP from ADP in the presence of a proton or sodium gradient. F-type ATPases consist of two structural domains, F(1) containing the extramembraneous catalytic core and F(0) containing the membrane proton channel, linked together by a central stalk and a peripheral stalk. During catalysis, ATP synthesis in the catalytic domain of F(1) is coupled via a rotary mechanism of the central stalk subunits to proton translocation. Its function is as follows. Component of the F(0) channel, it forms part of the peripheral stalk, linking F(1) to F(0). In Francisella tularensis subsp. tularensis (strain WY96-3418), this protein is ATP synthase subunit b.